The following is a 288-amino-acid chain: 4-diphosphocytidyl-2-C-methyl-D-erythritol kinase (288 aa).

Lys19 is a catalytic residue. 102 to 112 (PMGGGIGGGSS) lines the ATP pocket. Asp144 is an active-site residue.

This sequence belongs to the GHMP kinase family. IspE subfamily.

The catalysed reaction is 4-CDP-2-C-methyl-D-erythritol + ATP = 4-CDP-2-C-methyl-D-erythritol 2-phosphate + ADP + H(+). It participates in isoprenoid biosynthesis; isopentenyl diphosphate biosynthesis via DXP pathway; isopentenyl diphosphate from 1-deoxy-D-xylulose 5-phosphate: step 3/6. In terms of biological role, catalyzes the phosphorylation of the position 2 hydroxy group of 4-diphosphocytidyl-2C-methyl-D-erythritol. This Pseudomonas savastanoi pv. phaseolicola (strain 1448A / Race 6) (Pseudomonas syringae pv. phaseolicola (strain 1448A / Race 6)) protein is 4-diphosphocytidyl-2-C-methyl-D-erythritol kinase.